Reading from the N-terminus, the 227-residue chain is Ubiquitin domain-containing protein 1 (227 aa).

Positions 1 to 35 are disordered; it reads MGNCVGRQRRERPAAPGHPRKRAGRNEPLKKERLK. Positions 24–35 are enriched in basic and acidic residues; that stretch reads GRNEPLKKERLK. Positions 149–224 constitute a Ubiquitin-like domain; sequence FPLKVRLSTG…IQVIINQPPP (76 aa).

As to quaternary structure, interacts with UBTD1.

Its function is as follows. May be involved in the regulation of cellular senescence through a positive feedback loop with TP53. Is a TP53 downstream target gene that increases the stability of TP53 protein by promoting the ubiquitination and degradation of MDM2. The polypeptide is Ubiquitin domain-containing protein 1 (UBTD1) (Homo sapiens (Human)).